A 257-amino-acid polypeptide reads, in one-letter code: uncharacterized protein (257 aa).

An N-terminal signal peptide occupies residues 1–22 (MGYLKRFALYISVMILMFAIAG). Cys23 is lipidated: N-palmitoyl cysteine. Cys23 carries S-diacylglycerol cysteine lipidation.

The protein belongs to the staphylococcal tandem lipoprotein family.

It is found in the cell membrane. This is an uncharacterized protein from Staphylococcus aureus (strain MRSA252).